A 297-amino-acid polypeptide reads, in one-letter code: Ribonuclease HIII (297 aa).

The RNase H type-2 domain maps to 81-297 (IPIIGTDEVG…NTKKAQALLK (217 aa)). A divalent metal cation is bound by residues Asp-87, Glu-88, and Asp-192.

Belongs to the RNase HII family. RnhC subfamily. Requires Mn(2+) as cofactor. The cofactor is Mg(2+).

The protein resides in the cytoplasm. The enzyme catalyses Endonucleolytic cleavage to 5'-phosphomonoester.. Functionally, endonuclease that specifically degrades the RNA of RNA-DNA hybrids. The chain is Ribonuclease HIII from Streptococcus agalactiae serotype Ia (strain ATCC 27591 / A909 / CDC SS700).